We begin with the raw amino-acid sequence, 607 residues long: Aspartate--tRNA(Asp/Asn) ligase (607 aa).

Glu194 contacts L-aspartate. The segment at 218 to 221 (QLFK) is aspartate. Residue Arg240 participates in L-aspartate binding. ATP is bound by residues 240-242 (RDE) and Gln249. An L-aspartate-binding site is contributed by His468. Glu502 is an ATP binding site. Residue Arg509 coordinates L-aspartate. Position 554–557 (554–557 (GLDR)) interacts with ATP.

This sequence belongs to the class-II aminoacyl-tRNA synthetase family. Type 1 subfamily. In terms of assembly, homodimer.

It localises to the cytoplasm. The enzyme catalyses tRNA(Asx) + L-aspartate + ATP = L-aspartyl-tRNA(Asx) + AMP + diphosphate. Aspartyl-tRNA synthetase with relaxed tRNA specificity since it is able to aspartylate not only its cognate tRNA(Asp) but also tRNA(Asn). Reaction proceeds in two steps: L-aspartate is first activated by ATP to form Asp-AMP and then transferred to the acceptor end of tRNA(Asp/Asn). The protein is Aspartate--tRNA(Asp/Asn) ligase of Desulfotalea psychrophila (strain LSv54 / DSM 12343).